A 209-amino-acid chain; its full sequence is MADS-box transcription factor 2 (209 aa).

The 61-residue stretch at 1–61 (MGRGKIEIKR…GKLYDYCSPK (61 aa)) folds into the MADS-box domain. The region spanning 84–170 (HKSLSAEIDR…AFKLHQQDIA (87 aa)) is the K-box domain.

In terms of tissue distribution, highly expressed in anthers and carpels. Expressed in pollen, tapetum and stigma.

It localises to the nucleus. Functionally, probable transcription factor involved in the development of floral organs. B-class protein required for normal development of lodicules (whorl 2). The protein is MADS-box transcription factor 2 (MADS2) of Oryza sativa subsp. japonica (Rice).